A 417-amino-acid polypeptide reads, in one-letter code: NADH-quinone oxidoreductase subunit D (417 aa).

It belongs to the complex I 49 kDa subunit family. As to quaternary structure, NDH-1 is composed of 14 different subunits. Subunits NuoB, C, D, E, F, and G constitute the peripheral sector of the complex.

The protein localises to the cell inner membrane. It carries out the reaction a quinone + NADH + 5 H(+)(in) = a quinol + NAD(+) + 4 H(+)(out). Functionally, NDH-1 shuttles electrons from NADH, via FMN and iron-sulfur (Fe-S) centers, to quinones in the respiratory chain. The immediate electron acceptor for the enzyme in this species is believed to be ubiquinone. Couples the redox reaction to proton translocation (for every two electrons transferred, four hydrogen ions are translocated across the cytoplasmic membrane), and thus conserves the redox energy in a proton gradient. In Methylobacillus flagellatus (strain ATCC 51484 / DSM 6875 / VKM B-1610 / KT), this protein is NADH-quinone oxidoreductase subunit D.